A 323-amino-acid chain; its full sequence is tRNA dimethylallyltransferase (323 aa).

18-25 (GPTASGKS) contacts ATP. Residue 20–25 (TASGKS) coordinates substrate. Interaction with substrate tRNA stretches follow at residues 43–46 (DSAQ), 167–171 (QRIQR), and 249–254 (RCVGYR).

This sequence belongs to the IPP transferase family. Monomer. It depends on Mg(2+) as a cofactor.

The enzyme catalyses adenosine(37) in tRNA + dimethylallyl diphosphate = N(6)-dimethylallyladenosine(37) in tRNA + diphosphate. In terms of biological role, catalyzes the transfer of a dimethylallyl group onto the adenine at position 37 in tRNAs that read codons beginning with uridine, leading to the formation of N6-(dimethylallyl)adenosine (i(6)A). This Nitrosospira multiformis (strain ATCC 25196 / NCIMB 11849 / C 71) protein is tRNA dimethylallyltransferase.